Here is a 215-residue protein sequence, read N- to C-terminus: MMYPHPIIAKEGWPYLALIGIVTLPVHYIGGIAWSWPLWIIFIFVLQFFRDPQRIPAMGRDLVLSPADGRIVVVEKTNDPYADREALKISVFMNVFNVHSNRSAVNGLVKEIQYFPGKFVNADLDKASTENERNAVVIDANGHIVTLVQVAGLIARRILCYIHVGDRLKAGERYGFIRFGSRVDVYLPLTAEPLVSVGDKVFATNTALARLPGLD.

Residue serine 181 is the Schiff-base intermediate with substrate; via pyruvic acid of the active site. Position 181 is a pyruvic acid (Ser); by autocatalysis (serine 181).

It belongs to the phosphatidylserine decarboxylase family. PSD-A subfamily. Heterodimer of a large membrane-associated beta subunit and a small pyruvoyl-containing alpha subunit. It depends on pyruvate as a cofactor. Post-translationally, is synthesized initially as an inactive proenzyme. Formation of the active enzyme involves a self-maturation process in which the active site pyruvoyl group is generated from an internal serine residue via an autocatalytic post-translational modification. Two non-identical subunits are generated from the proenzyme in this reaction, and the pyruvate is formed at the N-terminus of the alpha chain, which is derived from the carboxyl end of the proenzyme. The post-translation cleavage follows an unusual pathway, termed non-hydrolytic serinolysis, in which the side chain hydroxyl group of the serine supplies its oxygen atom to form the C-terminus of the beta chain, while the remainder of the serine residue undergoes an oxidative deamination to produce ammonia and the pyruvoyl prosthetic group on the alpha chain.

It is found in the cell membrane. The enzyme catalyses a 1,2-diacyl-sn-glycero-3-phospho-L-serine + H(+) = a 1,2-diacyl-sn-glycero-3-phosphoethanolamine + CO2. Its pathway is phospholipid metabolism; phosphatidylethanolamine biosynthesis; phosphatidylethanolamine from CDP-diacylglycerol: step 2/2. In terms of biological role, catalyzes the formation of phosphatidylethanolamine (PtdEtn) from phosphatidylserine (PtdSer). The polypeptide is Phosphatidylserine decarboxylase proenzyme (Polynucleobacter asymbioticus (strain DSM 18221 / CIP 109841 / QLW-P1DMWA-1) (Polynucleobacter necessarius subsp. asymbioticus)).